A 414-amino-acid chain; its full sequence is Voltage-gated ClC-type chloride channel ClcB (414 aa).

11 helical membrane passes run 5–25, 54–74, 116–136, 147–167, 169–189, 220–240, 255–275, 292–312, 327–347, 353–373, and 381–401; these read LVIS…FHQA, ALTP…YQRY, SAIG…SVFA, LWVA…PLAG, LFIA…PVVI, VQYF…PLFL, LLPP…SLIF, TPPG…AVLA, LFVG…WPVL, LLMA…APIM, and MTGE…ATTI.

Belongs to the chloride channel (TC 2.A.49) family. ClcB subfamily.

It is found in the cell inner membrane. Functionally, probably acts as an electrical shunt for an outwardly-directed proton pump that is linked to amino acid decarboxylation, as part of the extreme acid resistance (XAR) response. The polypeptide is Voltage-gated ClC-type chloride channel ClcB (Yersinia pestis).